The sequence spans 195 residues: MTPQLILASTSVFRQALLQKLGLAFGSCNPDIDESPMTNESAQDLVLRLAKAKAKAGATHFPHGLIIGSDQVAVIDGKIIGKPLNRENAIKQLSQASGKVITFYTGLALYDAKTGEVTAQVEPFTVHFRQLTAAQIVAYVDKEQPFYCAGSFKSEGLGIALFTRLEGRDPNTLIGLPLILLTEMLLNHGIDVLAD.

Catalysis depends on D70, which acts as the Proton acceptor.

This sequence belongs to the Maf family. YceF subfamily. A divalent metal cation is required as a cofactor.

Its subcellular location is the cytoplasm. It carries out the reaction N(7)-methyl-GTP + H2O = N(7)-methyl-GMP + diphosphate + H(+). In terms of biological role, nucleoside triphosphate pyrophosphatase that hydrolyzes 7-methyl-GTP (m(7)GTP). May have a dual role in cell division arrest and in preventing the incorporation of modified nucleotides into cellular nucleic acids. The sequence is that of 7-methyl-GTP pyrophosphatase from Shewanella sp. (strain MR-4).